A 443-amino-acid polypeptide reads, in one-letter code: Probable cytosolic iron-sulfur protein assembly protein 1 (443 aa).

2 disordered regions span residues 1-27 (MSDPRPNTLSPLATLTPPSSSRTWQTA) and 95-124 (REEQGGNEDDFTNRRVGGAEDEDGRDDDDE). Positions 8-21 (TLSPLATLTPPSSS) are enriched in low complexity. WD repeat units follow at residues 14–57 (TLTP…LLHS) and 61–103 (GHKR…GNED). Over residues 113 to 124 (AEDEDGRDDDDE) the composition is skewed to acidic residues. WD repeat units follow at residues 135-174 (GHESEIKSLSWSPTGQYLATCSRDKSVWIWEELEDDNFET), 180-219 (EHDGDVKCVAWHPEEDLLASASYDDSVRLYREDSDDWVQV), 221-248 (CIAGKEGHGMTVWWVEFEGSGISGKDFR), 255-294 (SEEQTQHVDSMERSGPRLATCSDDRTVRIWRRKPRERAEN), 323-362 (VHERAIYSVSWSRTTGLIASAGSDGKIIIYKERWRKQTPN), and 391-440 (AHSV…DPPQ).

This sequence belongs to the WD repeat CIA1 family.

Its function is as follows. Essential component of the cytosolic iron-sulfur (Fe/S) protein assembly machinery. Required for the maturation of extramitochondrial Fe/S proteins. The chain is Probable cytosolic iron-sulfur protein assembly protein 1 from Phaeosphaeria nodorum (strain SN15 / ATCC MYA-4574 / FGSC 10173) (Glume blotch fungus).